The following is a 558-amino-acid chain: Glutamine--tRNA ligase (558 aa).

The 'HIGH' region motif lies at Pro36–His46. ATP contacts are provided by residues Glu37 to Asn39 and His43 to Ser49. Positions 69 and 214 each coordinate L-glutamine. Residues Thr233, Arg263–Leu264, and Leu271–Lys273 contribute to the ATP site. Positions Leu270 to Arg274 match the 'KMSKS' region motif.

Belongs to the class-I aminoacyl-tRNA synthetase family. As to quaternary structure, monomer.

The protein localises to the cytoplasm. It carries out the reaction tRNA(Gln) + L-glutamine + ATP = L-glutaminyl-tRNA(Gln) + AMP + diphosphate. In Nitrobacter hamburgensis (strain DSM 10229 / NCIMB 13809 / X14), this protein is Glutamine--tRNA ligase.